Consider the following 446-residue polypeptide: 3',5'-cyclic-AMP phosphodiesterase 7B (446 aa).

Residues 97-420 (LDEDYLGQAR…AQWKSLLSNQ (324 aa)) form the PDEase domain. The Proton donor role is filled by H173. A divalent metal cation is bound by residues H177, H213, D214, and D323. Residues 422–446 (RRRGSGQDLAGPAPETLEQTEGATP) are disordered. Residue S426 is modified to Phosphoserine. A Phosphothreonine modification is found at T445.

This sequence belongs to the cyclic nucleotide phosphodiesterase family. PDE7 subfamily. A divalent metal cation serves as cofactor. In terms of tissue distribution, highly expressed in brain.

It catalyses the reaction 3',5'-cyclic AMP + H2O = AMP + H(+). It functions in the pathway purine metabolism; 3',5'-cyclic AMP degradation; AMP from 3',5'-cyclic AMP: step 1/1. Its activity is regulated as follows. Inhibited by dipyridamole, IBMX and SCH 51866. Insensitive to zaprinast, rolipram, and milrinone. Its function is as follows. Hydrolyzes the second messenger cAMP, which is a key regulator of many important physiological processes. May be involved in the control of cAMP-mediated neural activity and cAMP metabolism in the brain. This chain is 3',5'-cyclic-AMP phosphodiesterase 7B, found in Mus musculus (Mouse).